We begin with the raw amino-acid sequence, 417 residues long: Histidine--tRNA ligase (417 aa).

Belongs to the class-II aminoacyl-tRNA synthetase family. As to quaternary structure, homodimer.

It localises to the cytoplasm. The catalysed reaction is tRNA(His) + L-histidine + ATP = L-histidyl-tRNA(His) + AMP + diphosphate + H(+). The polypeptide is Histidine--tRNA ligase (Nitratidesulfovibrio vulgaris (strain ATCC 29579 / DSM 644 / CCUG 34227 / NCIMB 8303 / VKM B-1760 / Hildenborough) (Desulfovibrio vulgaris)).